A 277-amino-acid polypeptide reads, in one-letter code: Probable cytochrome c oxidase subunit 3 (277 aa).

The next 6 helical transmembrane spans lie at 20-40, 45-65, 88-108, 173-193, 211-231, and 255-275; these read PWPI…VSFM, FNHY…YSWW, IGMA…FASF, CVTA…MQAY, FYLA…FLIV, and AWYW…VYIF.

The protein belongs to the cytochrome c oxidase subunit 3 family.

Its subcellular location is the cell membrane. The catalysed reaction is 4 Fe(II)-[cytochrome c] + O2 + 8 H(+)(in) = 4 Fe(III)-[cytochrome c] + 2 H2O + 4 H(+)(out). The sequence is that of Probable cytochrome c oxidase subunit 3 (ctaE) from Rickettsia bellii (strain RML369-C).